Here is a 103-residue protein sequence, read N- to C-terminus: Small ribosomal subunit protein uS10 (103 aa).

This sequence belongs to the universal ribosomal protein uS10 family. As to quaternary structure, part of the 30S ribosomal subunit.

Its function is as follows. Involved in the binding of tRNA to the ribosomes. The chain is Small ribosomal subunit protein uS10 from Picrophilus torridus (strain ATCC 700027 / DSM 9790 / JCM 10055 / NBRC 100828 / KAW 2/3).